The sequence spans 446 residues: Argininosuccinate lyase (446 aa).

Belongs to the lyase 1 family. Argininosuccinate lyase subfamily.

Its subcellular location is the cytoplasm. It catalyses the reaction 2-(N(omega)-L-arginino)succinate = fumarate + L-arginine. It participates in amino-acid biosynthesis; L-arginine biosynthesis; L-arginine from L-ornithine and carbamoyl phosphate: step 3/3. The chain is Argininosuccinate lyase from Sulfurisphaera tokodaii (strain DSM 16993 / JCM 10545 / NBRC 100140 / 7) (Sulfolobus tokodaii).